A 208-amino-acid polypeptide reads, in one-letter code: Thymidylate kinase (208 aa).

11–18 is an ATP binding site; the sequence is GGEGAGKS.

The protein belongs to the thymidylate kinase family.

The catalysed reaction is dTMP + ATP = dTDP + ADP. Phosphorylation of dTMP to form dTDP in both de novo and salvage pathways of dTTP synthesis. The sequence is that of Thymidylate kinase (tmk) from Caulobacter vibrioides (strain ATCC 19089 / CIP 103742 / CB 15) (Caulobacter crescentus).